A 621-amino-acid chain; its full sequence is Endoglucanase 25 (621 aa).

Residues 1–26 (MYGRDPWGGPLEINTADSATDDDRSR) form a disordered region. Topologically, residues 1–70 (MYGRDPWGGP…DLGCIIVSRK (70 aa)) are cytoplasmic. The tract at residues 48 to 49 (LL) is polarized targeting signal 1 (PTS1). A polarized targeting signal 2 (PTS2) region spans residues 59-62 (YVDL). Residues 71-91 (IFVWTVGTLVAAALLAGFITL) form a helical; Signal-anchor for type II membrane protein membrane-spanning segment. The Extracellular segment spans residues 92-621 (IVKTVPRHHP…PPPPPAPWKP (530 aa)). Asn108 and Asn133 each carry an N-linked (GlcNAc...) asparagine glycan. Catalysis depends on Asp165, which acts as the Nucleophile. N-linked (GlcNAc...) asparagine glycans are attached at residues Asn216, Asn324, Asn345, Asn408, and Asn425. Residues His513 and Asp561 contribute to the active site. N-linked (GlcNAc...) asparagine glycosylation occurs at Asn567. Glu570 is an active-site residue.

The protein belongs to the glycosyl hydrolase 9 (cellulase E) family. Glycosylated. N-glycosylation of KOR in the endoplasmic reticulum followed by N-glycan modifications in the Golgi are essential for catalytic activity. Highly expressed in roots and stems, at intermediate levels in leaves and flowers, and at lower levels in siliques. Expressed in xylem (at protein level).

The protein resides in the cell membrane. It carries out the reaction Endohydrolysis of (1-&gt;4)-beta-D-glucosidic linkages in cellulose, lichenin and cereal beta-D-glucans.. In terms of biological role, required for cellulose microfibril formation. Involved in cell wall assembly during cell elongation and cell plate maturation in cytokinesis. Required for secondary cell wall formation in the developing xylem. May cycle through different intracellular compartments, including plasma membrane. This Arabidopsis thaliana (Mouse-ear cress) protein is Endoglucanase 25 (KOR).